The following is a 216-amino-acid chain: Redox-sensing transcriptional repressor Rex (216 aa).

Positions 20-59 (QYYRLFKSLVEENVTRTNSQLISEKIGVDAATIRRDFSLF) form a DNA-binding region, H-T-H motif. 94–99 (GVGNLG) contributes to the NAD(+) binding site.

This sequence belongs to the transcriptional regulatory Rex family. As to quaternary structure, homodimer.

Its subcellular location is the cytoplasm. Modulates transcription in response to changes in cellular NADH/NAD(+) redox state. The sequence is that of Redox-sensing transcriptional repressor Rex from Lactococcus lactis subsp. cremoris (strain SK11).